A 520-amino-acid polypeptide reads, in one-letter code: GMP synthase [glutamine-hydrolyzing] (520 aa).

One can recognise a Glutamine amidotransferase type-1 domain in the interval 9–202; sequence KILILDFGSQ…VRQICGCTGQ (194 aa). The Nucleophile role is filled by cysteine 86. Residues histidine 176 and glutamate 178 contribute to the active site. Positions 203–395 constitute a GMPS ATP-PPase domain; it reads WTPGQIIEDA…LGLPHPMVYR (193 aa). Position 230–236 (230–236) interacts with ATP; sequence SGGVDSS.

Homodimer.

The catalysed reaction is XMP + L-glutamine + ATP + H2O = GMP + L-glutamate + AMP + diphosphate + 2 H(+). Its pathway is purine metabolism; GMP biosynthesis; GMP from XMP (L-Gln route): step 1/1. Functionally, catalyzes the synthesis of GMP from XMP. The polypeptide is GMP synthase [glutamine-hydrolyzing] (Syntrophotalea carbinolica (strain DSM 2380 / NBRC 103641 / GraBd1) (Pelobacter carbinolicus)).